Here is a 373-residue protein sequence, read N- to C-terminus: Peptide chain release factor 2 (373 aa).

N5-methylglutamine is present on Gln-252.

The protein belongs to the prokaryotic/mitochondrial release factor family. Post-translationally, methylated by PrmC. Methylation increases the termination efficiency of RF2.

Its subcellular location is the cytoplasm. Peptide chain release factor 2 directs the termination of translation in response to the peptide chain termination codons UGA and UAA. This chain is Peptide chain release factor 2, found in Staphylococcus saprophyticus subsp. saprophyticus (strain ATCC 15305 / DSM 20229 / NCIMB 8711 / NCTC 7292 / S-41).